The sequence spans 57 residues: U13-myrmicitoxin-Mri1a (57 aa).

An N-terminal signal peptide occupies residues Met1–Ala23. A propeptide spanning residues Glu24–Ala29 is cleaved from the precursor. At Glu56 the chain carries Glutamic acid 1-amide.

As to expression, expressed by the venom gland.

The protein resides in the secreted. Functionally, induces paralysis 1 hour after injection into insects (blowfly L.caesar) but does not appear to be lethal. The polypeptide is U13-myrmicitoxin-Mri1a (Manica rubida (European giant red ant)).